The sequence spans 366 residues: Histidinol-phosphate aminotransferase (366 aa).

K228 is modified (N6-(pyridoxal phosphate)lysine).

The protein belongs to the class-II pyridoxal-phosphate-dependent aminotransferase family. Histidinol-phosphate aminotransferase subfamily. In terms of assembly, homodimer. It depends on pyridoxal 5'-phosphate as a cofactor.

The catalysed reaction is L-histidinol phosphate + 2-oxoglutarate = 3-(imidazol-4-yl)-2-oxopropyl phosphate + L-glutamate. Its pathway is amino-acid biosynthesis; L-histidine biosynthesis; L-histidine from 5-phospho-alpha-D-ribose 1-diphosphate: step 7/9. This chain is Histidinol-phosphate aminotransferase, found in Corynebacterium glutamicum (strain ATCC 13032 / DSM 20300 / JCM 1318 / BCRC 11384 / CCUG 27702 / LMG 3730 / NBRC 12168 / NCIMB 10025 / NRRL B-2784 / 534).